A 156-amino-acid chain; its full sequence is Small ribosomal subunit protein uS7 (156 aa).

The protein belongs to the universal ribosomal protein uS7 family. Part of the 30S ribosomal subunit. Contacts proteins S9 and S11.

In terms of biological role, one of the primary rRNA binding proteins, it binds directly to 16S rRNA where it nucleates assembly of the head domain of the 30S subunit. Is located at the subunit interface close to the decoding center, probably blocks exit of the E-site tRNA. In Bacillus licheniformis (strain ATCC 14580 / DSM 13 / JCM 2505 / CCUG 7422 / NBRC 12200 / NCIMB 9375 / NCTC 10341 / NRRL NRS-1264 / Gibson 46), this protein is Small ribosomal subunit protein uS7.